We begin with the raw amino-acid sequence, 254 residues long: Triosephosphate isomerase (254 aa).

Residue 9–11 (NWK) participates in substrate binding. The active-site Electrophile is the histidine 96. The active-site Proton acceptor is glutamate 169. Residues glycine 175, serine 215, and 236–237 (GG) each bind substrate.

It belongs to the triosephosphate isomerase family. As to quaternary structure, homodimer.

The protein resides in the cytoplasm. The enzyme catalyses D-glyceraldehyde 3-phosphate = dihydroxyacetone phosphate. The protein operates within carbohydrate biosynthesis; gluconeogenesis. It functions in the pathway carbohydrate degradation; glycolysis; D-glyceraldehyde 3-phosphate from glycerone phosphate: step 1/1. In terms of biological role, involved in the gluconeogenesis. Catalyzes stereospecifically the conversion of dihydroxyacetone phosphate (DHAP) to D-glyceraldehyde-3-phosphate (G3P). The protein is Triosephosphate isomerase of Borrelia hermsii (strain HS1 / DAH).